Here is a 79-residue protein sequence, read N- to C-terminus: Beta-defensin 15 (79 aa).

The N-terminal stretch at 1–20 is a signal peptide; the sequence is MKTFLFLFAVFFFLDPAKNA. Cystine bridges form between cysteine 26-cysteine 53, cysteine 33-cysteine 47, and cysteine 37-cysteine 54.

The protein belongs to the beta-defensin family.

It is found in the secreted. Its function is as follows. Has antibacterial activity. This Rattus norvegicus (Rat) protein is Beta-defensin 15 (Defb15).